The primary structure comprises 115 residues: NAD(P)H-quinone oxidoreductase subunit M (115 aa).

The protein belongs to the complex I NdhM subunit family. As to quaternary structure, NDH-1 can be composed of about 15 different subunits; different subcomplexes with different compositions have been identified which probably have different functions.

It localises to the cellular thylakoid membrane. The catalysed reaction is a plastoquinone + NADH + (n+1) H(+)(in) = a plastoquinol + NAD(+) + n H(+)(out). It catalyses the reaction a plastoquinone + NADPH + (n+1) H(+)(in) = a plastoquinol + NADP(+) + n H(+)(out). Its function is as follows. NDH-1 shuttles electrons from an unknown electron donor, via FMN and iron-sulfur (Fe-S) centers, to quinones in the respiratory and/or the photosynthetic chain. The immediate electron acceptor for the enzyme in this species is believed to be plastoquinone. Couples the redox reaction to proton translocation, and thus conserves the redox energy in a proton gradient. Cyanobacterial NDH-1 also plays a role in inorganic carbon-concentration. The chain is NAD(P)H-quinone oxidoreductase subunit M from Prochlorococcus marinus (strain MIT 9515).